The chain runs to 526 residues: Peptide chain release factor 3 (526 aa).

The tr-type G domain maps to 11–277 (SKRRTFAIIS…SLIKWAPSPL (267 aa)). GTP is bound by residues 20–27 (SHPDAGKT), 88–92 (DTPGH), and 142–145 (NKLD).

It belongs to the TRAFAC class translation factor GTPase superfamily. Classic translation factor GTPase family. PrfC subfamily.

Its subcellular location is the cytoplasm. Functionally, increases the formation of ribosomal termination complexes and stimulates activities of RF-1 and RF-2. It binds guanine nucleotides and has strong preference for UGA stop codons. It may interact directly with the ribosome. The stimulation of RF-1 and RF-2 is significantly reduced by GTP and GDP, but not by GMP. This Buchnera aphidicola subsp. Acyrthosiphon pisum (strain 5A) protein is Peptide chain release factor 3.